The chain runs to 383 residues: Histidine decarboxylase (383 aa).

Position 120 (His120) interacts with substrate. An N6-(pyridoxal phosphate)lysine modification is found at Lys233.

This sequence belongs to the group II decarboxylase family. Homotetramer. Pyridoxal 5'-phosphate serves as cofactor.

It catalyses the reaction L-histidine + H(+) = histamine + CO2. The sequence is that of Histidine decarboxylase from Acinetobacter baumannii (strain ATCC 17978 / DSM 105126 / CIP 53.77 / LMG 1025 / NCDC KC755 / 5377).